The sequence spans 444 residues: Glycerol-3-phosphate transporter (444 aa).

Residues 1 to 36 (MLNIFKPAPHIERLDDSKMDAAYKRLRLQVFIGIFI) lie on the Cytoplasmic side of the membrane. A helical transmembrane segment spans residues 37-57 (GYAGYYLLRKNFAFAIPYLQE). Topologically, residues 58-63 (QGFSKT) are extracellular. A helical membrane pass occupies residues 64 to 84 (ELGLVLAAVSIAYGFSKFIMG). Topologically, residues 85 to 93 (MVSDRCNPR) are cytoplasmic. A helical transmembrane segment spans residues 94–112 (YFLATGLFLSAIVNILFVS). Topologically, residues 113-120 (MPWVTSSV) are extracellular. Residues 121–141 (TIMFIFMFINGWFQGMGWPPC) traverse the membrane as a helical segment. Topologically, residues 142 to 160 (GRTMAHWFSISERGTKMSI) are cytoplasmic. A helical transmembrane segment spans residues 161 to 180 (WNVAHNIGGGILAPLVTLGI). The Extracellular portion of the chain corresponds to 181 to 189 (AMFVTWKSV). A helical membrane pass occupies residues 190–207 (FFFPAIIAIIISFLIVLL). Residues 208-261 (VRDTPQSCGLPPIEEYRNDYPKHAFKNQEKELTTKEILFQYVLNNKFLWYIAFA) lie on the Cytoplasmic side of the membrane. The chain crosses the membrane as a helical span at residues 262–282 (NVFVYFVRYGVVDWAPTYLTE). Residues 283 to 287 (AKGFS) are Extracellular-facing. The chain crosses the membrane as a helical span at residues 288-308 (PEDSRWSYFLYEYAGIPGTIL). The Cytoplasmic segment spans residues 309–321 (CGWISDRFFKSRR). A helical transmembrane segment spans residues 322–341 (APAGVLFMAGVFIAVLVYWL). At 342–346 (NPAGN) the chain is on the extracellular side. Residues 347 to 368 (PLVDNIALISIGFLIYGPVMLI) traverse the membrane as a helical segment. Topologically, residues 369-387 (GLQAIDLAPKKAAGTAAGL) are cytoplasmic. The helical transmembrane segment at 388 to 409 (TGFFGYIGGSAFANAIMGFVVD) threads the bilayer. The Extracellular segment spans residues 410 to 414 (RFNWN). Residues 415–435 (GGFIMLISSCILAIVFLALTW) traverse the membrane as a helical segment. Residues 436-444 (NTGKRAEHV) lie on the Cytoplasmic side of the membrane.

Belongs to the major facilitator superfamily. Organophosphate:Pi antiporter (OPA) (TC 2.A.1.4) family.

It localises to the cell membrane. Responsible for glycerol-3-phosphate uptake. The protein is Glycerol-3-phosphate transporter (glpT) of Bacillus subtilis (strain 168).